Consider the following 1199-residue polypeptide: DNA-directed RNA polymerase subunit beta' (1199 aa).

The Zn(2+) site is built by cysteine 60, cysteine 62, cysteine 75, and cysteine 78. 3 residues coordinate Mg(2+): aspartate 449, aspartate 451, and aspartate 453. The Zn(2+) site is built by cysteine 818, cysteine 892, cysteine 899, and cysteine 902.

The protein belongs to the RNA polymerase beta' chain family. In terms of assembly, RNAP is composed of a core of 2 alpha, a beta and a beta' subunit. The core is associated with a delta subunit, and at least one of epsilon or omega. When a sigma factor is associated with the core the holoenzyme is formed, which can initiate transcription. Mg(2+) is required as a cofactor. Zn(2+) serves as cofactor.

It catalyses the reaction RNA(n) + a ribonucleoside 5'-triphosphate = RNA(n+1) + diphosphate. DNA-dependent RNA polymerase catalyzes the transcription of DNA into RNA using the four ribonucleoside triphosphates as substrates. This chain is DNA-directed RNA polymerase subunit beta', found in Bacillus subtilis (strain 168).